The sequence spans 1186 residues: Syntaxin-binding protein 5-like (1186 aa).

An N-acetylmethionine modification is found at M1. The segment at 15-40 (ASSPGSGSSSGSNSGGGAGSGSVHPA) is disordered. Positions 16 to 26 (SSPGSGSSSGS) are enriched in low complexity. WD repeat units lie at residues 74–107 (TALAFDPVQKILAIGTRTGAIRILGRPGVDCYCQ), 114–153 (VLQLQFLINEGALVSASSDDTLHLWNLRQKRPAILHSLKF), 158–194 (ITYCHLPFQSKWLYVGTERGNTHIVNIESFILSGYVI), 213–247 (HLSDSPRDEGKLLIGYENGTVVFWDLKSKRAELRV), 253–285 (IHSIDWHHEGKQFMCSHSDGSLTLWNLKSPSRP), 307–349 (PILK…KAIT), 357–391 (IVEFLTLCETPYPNEFQEPYAVVVLLEKDLIVVDL), 413–490 (TCTA…YKLK), 518–629 (QMIY…ELVI), and 643–705 (TSLA…IADN). T568 carries the post-translational modification Phosphothreonine. A phosphoserine mark is found at S574, S589, and S593. T596 is modified (phosphothreonine). S599 bears the Phosphoserine mark. R709 carries the omega-N-methylarginine modification. The span at 748-769 (TSDHVNGHCTSPTSQSCSSGKR) shows a compositional bias: polar residues. The interval 748-771 (TSDHVNGHCTSPTSQSCSSGKRLS) is disordered. A phosphoserine mark is found at S763, S765, S766, S771, S772, S793, S800, S812, S820, S822, and S823. WD repeat units lie at residues 832 to 889 (ITAL…SGTF), 898 to 969 (TFSC…QTCL), 974 to 1018 (ITET…LDVN), and 1032 to 1055 (CFTNEGQALYLVSPTEIQRLTYSQ). T1093 is subject to Phosphothreonine. One can recognise a v-SNARE coiled-coil homology domain in the interval 1121–1181 (SIEGMKGAAG…HELMLKYKDK (61 aa)).

Belongs to the WD repeat L(2)GL family. In terms of assembly, interacts with STX1A and STX4. In terms of processing, phosphorylated, leading to STXBP5L increased turnover and subsequent de-repression of insulin secretion. Phosphorylated on serine residues in response to glucose or phorbol esters. Post-translationally, ubiquitinated by the E3 ligase SYVN1, leading to STXBP5L proteasomal degradation. In terms of tissue distribution, detected in kidney, hippocampus and lung carcinoma.

It localises to the cytoplasm. The protein resides in the cell membrane. The protein localises to the membrane. In terms of biological role, plays a role in vesicle trafficking and exocytosis inhibition. In pancreatic beta-cells, inhibits insulin secretion probably by interacting with and regulating STX1A and STX4, key t-SNARE proteins involved in the fusion of insulin granules to the plasma membrane. Also plays a role in neurotransmitter release by inhibiting basal acetylcholine release from axon terminals and by preventing synaptic fatigue upon repetitive stimulation. Promotes as well axonal outgrowth. This chain is Syntaxin-binding protein 5-like (STXBP5L), found in Homo sapiens (Human).